We begin with the raw amino-acid sequence, 371 residues long: tRNA-specific 2-thiouridylase MnmA (371 aa).

Residues Gly-13–Ser-20 and Met-39 each bind ATP. Residues Asn-99–Asp-101 form an interaction with target base in tRNA region. The active-site Nucleophile is the Cys-104. Cys-104 and Cys-200 are oxidised to a cystine. ATP is bound at residue Gly-128. Residues Lys-150–Gln-152 form an interaction with tRNA region. Catalysis depends on Cys-200, which acts as the Cysteine persulfide intermediate. The segment at Arg-308–Tyr-309 is interaction with tRNA.

This sequence belongs to the MnmA/TRMU family.

It localises to the cytoplasm. It catalyses the reaction S-sulfanyl-L-cysteinyl-[protein] + uridine(34) in tRNA + AH2 + ATP = 2-thiouridine(34) in tRNA + L-cysteinyl-[protein] + A + AMP + diphosphate + H(+). In terms of biological role, catalyzes the 2-thiolation of uridine at the wobble position (U34) of tRNA, leading to the formation of s(2)U34. This chain is tRNA-specific 2-thiouridylase MnmA, found in Listeria welshimeri serovar 6b (strain ATCC 35897 / DSM 20650 / CCUG 15529 / CIP 8149 / NCTC 11857 / SLCC 5334 / V8).